A 162-amino-acid chain; its full sequence is NADH-ubiquinone oxidoreductase chain 6 (162 aa).

The next 5 helical transmembrane spans lie at Met1 to Thr21, Val32 to Leu52, Leu55 to Ile75, Trp87 to Met107, and Leu129 to Phe149.

This sequence belongs to the complex I subunit 6 family.

It localises to the mitochondrion membrane. The catalysed reaction is a ubiquinone + NADH + 5 H(+)(in) = a ubiquinol + NAD(+) + 4 H(+)(out). In terms of biological role, core subunit of the mitochondrial membrane respiratory chain NADH dehydrogenase (Complex I) that is believed to belong to the minimal assembly required for catalysis. Complex I functions in the transfer of electrons from NADH to the respiratory chain. The immediate electron acceptor for the enzyme is believed to be ubiquinone. The sequence is that of NADH-ubiquinone oxidoreductase chain 6 (ND6) from Chlamydomonas reinhardtii (Chlamydomonas smithii).